The chain runs to 711 residues: Zinc finger protein 175 (711 aa).

Residues 1–11 (MPADVNLSQKP) show a composition bias toward polar residues. The tract at residues 1–21 (MPADVNLSQKPQVLGPEKQDG) is disordered. Residues 27-98 (VSFEDVTVDF…EAEVSHQRCQ (72 aa)) enclose the KRAB domain. The segment at 279-301 (DGCSECGGSFTQKSHLFAQQRIH) adopts a C2H2-type 1; atypical zinc-finger fold. The C2H2-type 2; atypical zinc finger occupies 307–329 (HECGKCGKAFMPQLKLSVYLTDH). A C2H2-type 3 zinc finger spans residues 335-357 (CICKECGKVFIQRSELLTHQKTH). The short motif at 359–362 (RKKP) is the Nuclear localization signal element. 12 C2H2-type zinc fingers span residues 363-385 (YKCH…QRTH), 391-413 (YECS…QKIH), 419-441 (YACS…QRIH), 447-469 (YVCI…QRSH), 475-497 (YQCH…HRIH), 503-525 (YECS…QKIH), 531-553 (HVCS…QRIH), 559-581 (YKCS…QRIH), 587-609 (YVCT…QITH), 615-637 (FVCY…QRTH), 643-665 (YECL…QRIH), and 671-693 (YVCS…QTTH).

Belongs to the krueppel C2H2-type zinc-finger protein family. Ubiquitous.

It is found in the cytoplasm. The protein resides in the nucleus. Functionally, down-regulates the expression of several chemokine receptors. Interferes with HIV-1 replication by suppressing Tat-induced viral LTR promoter activity. The sequence is that of Zinc finger protein 175 (ZNF175) from Homo sapiens (Human).